The following is a 197-amino-acid chain: Xanthine phosphoribosyltransferase (197 aa).

Leu-20 and Asn-27 together coordinate xanthine. 128–132 is a binding site for 5-phospho-alpha-D-ribose 1-diphosphate; it reads ANGQA. Lys-156 is a xanthine binding site.

It belongs to the purine/pyrimidine phosphoribosyltransferase family. Xpt subfamily. In terms of assembly, homodimer.

The protein resides in the cytoplasm. It carries out the reaction XMP + diphosphate = xanthine + 5-phospho-alpha-D-ribose 1-diphosphate. Its pathway is purine metabolism; XMP biosynthesis via salvage pathway; XMP from xanthine: step 1/1. Converts the preformed base xanthine, a product of nucleic acid breakdown, to xanthosine 5'-monophosphate (XMP), so it can be reused for RNA or DNA synthesis. In Bacillus cereus (strain ATCC 14579 / DSM 31 / CCUG 7414 / JCM 2152 / NBRC 15305 / NCIMB 9373 / NCTC 2599 / NRRL B-3711), this protein is Xanthine phosphoribosyltransferase.